Consider the following 422-residue polypeptide: L-cysteine:1D-myo-inositol 2-amino-2-deoxy-alpha-D-glucopyranoside ligase (422 aa).

The segment at 1 to 34 is disordered; that stretch reads MKSWSTPAPPTVPSRPDRLRLHDTATGRTRHPGN. Over residues 15-25 the composition is skewed to basic and acidic residues; sequence RPDRLRLHDTA. A Zn(2+)-binding site is contributed by Cys44. L-cysteinyl-5'-AMP contacts are provided by residues 44 to 47, Thr59, and 82 to 84; these read CGIT and NVT. A 'HIGH' region motif is present at residues 46-56; that stretch reads ITPYDATHLGH. The short motif at 196-201 is the 'ERGGDP' region element; sequence ERGGDP. Residue Trp237 coordinates L-cysteinyl-5'-AMP. Residue Cys241 coordinates Zn(2+). 259-261 is an L-cysteinyl-5'-AMP binding site; the sequence is GSD. His266 serves as a coordination point for Zn(2+). Val292 lines the L-cysteinyl-5'-AMP pocket. The short motif at 298–302 is the 'KMSKS' region element; that stretch reads KMSKS.

The protein belongs to the class-I aminoacyl-tRNA synthetase family. MshC subfamily. Monomer. It depends on Zn(2+) as a cofactor.

The catalysed reaction is 1D-myo-inositol 2-amino-2-deoxy-alpha-D-glucopyranoside + L-cysteine + ATP = 1D-myo-inositol 2-(L-cysteinylamino)-2-deoxy-alpha-D-glucopyranoside + AMP + diphosphate + H(+). Catalyzes the ATP-dependent condensation of GlcN-Ins and L-cysteine to form L-Cys-GlcN-Ins. This Micrococcus luteus (strain ATCC 4698 / DSM 20030 / JCM 1464 / CCM 169 / CCUG 5858 / IAM 1056 / NBRC 3333 / NCIMB 9278 / NCTC 2665 / VKM Ac-2230) (Micrococcus lysodeikticus) protein is L-cysteine:1D-myo-inositol 2-amino-2-deoxy-alpha-D-glucopyranoside ligase.